A 71-amino-acid chain; its full sequence is 26S proteasome complex subunit rpn15 (71 aa).

The segment at methionine 1–aspartate 38 is disordered. Over residues asparagine 11 to alanine 22 the composition is skewed to acidic residues. Residues aspartate 16–asparagine 25 form a UBS-II region. A UBS-I region spans residues aspartate 38–aspartate 49.

Belongs to the DSS1/SEM1 family. In terms of assembly, interacts with mlo3, rae1, nup98/nup189 and nup146. Interacts with rad24. Interacts (via UBSs) with ubiquitin (ubi3/ubi5).

The protein resides in the cytoplasm. It localises to the nucleus. Its function is as follows. Versatile protein that might stabilize multiple protein complexes involved in diverse pathways. Subunit of the 26S proteasome which plays a role in ubiquitin-dependent proteolysis. Acts as a ubiquitin receptor of the 26S proteasome, by interacting with ubiquitin chains linked by 'Lys-63' and 'Lys-48'. Involved in nuclear export of specific sets of mRNAs. Links the mRNA adapter mlo3 to rae1 for targeting mRNA-protein complex to the proteins of the nucleoporin complex (NPC). Involved in recombinational repair of DNA. Plays a critical role in linking repair and checkpoint factors to damaged DNA sites by specifically recruiting rad24 and cdc25 to the DSBs. This is 26S proteasome complex subunit rpn15 (rpn15) from Schizosaccharomyces pombe (strain 972 / ATCC 24843) (Fission yeast).